The sequence spans 192 residues: Cytochrome c oxidase assembly protein CtaG (192 aa).

Residues 1-9 (MSLSPHQKT) are Cytoplasmic-facing. A helical; Signal-anchor for type II membrane protein membrane pass occupies residues 10-30 (AGWLVGVVVVMGAASFAAVPF). The Periplasmic segment spans residues 31–192 (YDWFCRVTGF…AARPAGIDVN (162 aa)).

Belongs to the COX11/CtaG family.

It is found in the cell inner membrane. Exerts its effect at some terminal stage of cytochrome c oxidase synthesis, probably by being involved in the insertion of the copper B into subunit I. The protein is Cytochrome c oxidase assembly protein CtaG of Cereibacter sphaeroides (strain ATCC 17025 / ATH 2.4.3) (Rhodobacter sphaeroides).